The following is a 510-amino-acid chain: 2,3-bisphosphoglycerate-independent phosphoglycerate mutase (510 aa).

Mn(2+) is bound by residues Asp-12 and Ser-62. The Phosphoserine intermediate role is filled by Ser-62. Substrate contacts are provided by residues His-123, 153–154, Arg-185, Arg-191, 260–263, and Lys-333; these read RD and RPDR. Mn(2+) is bound by residues Asp-400, His-404, Asp-441, His-442, and His-460.

This sequence belongs to the BPG-independent phosphoglycerate mutase family. Monomer. Requires Mn(2+) as cofactor.

The catalysed reaction is (2R)-2-phosphoglycerate = (2R)-3-phosphoglycerate. It participates in carbohydrate degradation; glycolysis; pyruvate from D-glyceraldehyde 3-phosphate: step 3/5. In terms of biological role, catalyzes the interconversion of 2-phosphoglycerate and 3-phosphoglycerate. The chain is 2,3-bisphosphoglycerate-independent phosphoglycerate mutase from Clostridium acetobutylicum (strain ATCC 824 / DSM 792 / JCM 1419 / IAM 19013 / LMG 5710 / NBRC 13948 / NRRL B-527 / VKM B-1787 / 2291 / W).